The chain runs to 71 residues: Alpha-cobratoxin (71 aa).

Intrachain disulfides connect C3–C20, C14–C41, C26–C30, C45–C56, and C57–C62.

It belongs to the three-finger toxin family. Long-chain subfamily. Type II alpha-neurotoxin sub-subfamily. Monomer, homo- or heterodimer with cytotoxins 1 (P60305), 2 (AC P01445), and 3 (AC P01446); disulfide-linked. In homodimer alpha-cobratoxin, selective reduction of Cys(26)-Cys(30) in one subunit does not affect the activity against the alpha-7/CHRNA7 nAChR, whereas its reduction in both subunits almost prevents alpha-7/CHRNA7 nAChR recognition. On the contrary, reduction of one or both Cys(26)-Cys(30) disulfide bonds in the homodimer considerably potentiates inhibition of the alpha-3-beta-2/CHRNA3-CHRNB2 nAChR by the toxin. In terms of tissue distribution, expressed by the venom gland.

The protein resides in the secreted. Monomer: binds with high affinity to muscular (alpha-1-beta-1-gamma-delta/CHRNA1-CHRNB1-CHRNG-CHRND) nAChR (tested on Torpedo californica, Kd=0.2-4.5 nM) and neuronal alpha-7/CHRNA7 nicotinic acetylcholine receptors (Kd=13-105 nM). Also inhibits GABA(A) channels. Heteropentamer targets studied are composed of alpha-1-beta-3-gamma-2 (GABRA1-GABRB3-GABRG2) subunits (IC(50)=236 nM), alpha-1-beta-2-gamma-2 (GABRA1-GABRB2-GABRG2) subunits (IC(50)=469 nM), alpha-2-beta-2-gamma-2 (GABRA2-GABRB2-GABRG2) subunits (IC(50)=485 nM), alpha-5-beta-3-gamma-2 (GABRA5-GABRB3-GABRG2) subunits (IC(50)=635 nM), and alpha-2-beta-3-gamma-2 (GABRA2-GABRB3-GABRG2) subunits (IC(50)=1099 nM) (activated by 10 uM GABA). Functionally, homodimer: binds with high affinity (but lower than the monomeric form) to muscular (IC(50)=9.7 nM) and with low affinity to neuronal alpha-7/CHRNA7 nAChRs (IC(50)=1370 nM). However, it acquires (compared to the monomeric form) the capacity to block alpha-3/beta-2 (CHRNA3/CHRNB2) nAChRs. In terms of biological role, heterodimer with cytotoxin 3 (AC P01446): is slightly more active than the homodimer in inhibiting alpha-7/CHRNA7 nAChR and is considerably more active in blocking the alpha-3-beta-2/CHRNA3-CHRNB2 nAChR. The chain is Alpha-cobratoxin from Naja kaouthia (Monocled cobra).